The following is a 480-amino-acid chain: Glycogen synthase 1 (480 aa).

Position 15 (K15) interacts with ADP-alpha-D-glucose.

Belongs to the glycosyltransferase 1 family. Bacterial/plant glycogen synthase subfamily.

The catalysed reaction is [(1-&gt;4)-alpha-D-glucosyl](n) + ADP-alpha-D-glucose = [(1-&gt;4)-alpha-D-glucosyl](n+1) + ADP + H(+). Its pathway is glycan biosynthesis; glycogen biosynthesis. In terms of biological role, synthesizes alpha-1,4-glucan chains using ADP-glucose. The chain is Glycogen synthase 1 (glgA1) from Rhizobium meliloti (strain 1021) (Ensifer meliloti).